Consider the following 266-residue polypeptide: uncharacterized protein (266 aa).

Transmembrane regions (helical) follow at residues isoleucine 9–phenylalanine 29, threonine 37–tyrosine 57, leucine 69–leucine 89, phenylalanine 123–threonine 143, tyrosine 153–alanine 173, leucine 184–leucine 204, serine 216–leucine 236, and threonine 246–valine 266.

It is found in the cell membrane. This is an uncharacterized protein from Haemophilus influenzae (strain ATCC 51907 / DSM 11121 / KW20 / Rd).